Reading from the N-terminus, the 164-residue chain is Single-stranded DNA-binding protein 2 (164 aa).

In terms of domain architecture, SSB spans 5-109 (INKVILVGNL…IVADEMQMLG (105 aa)). Residues 105-164 (MQMLGGRSDGGGMGGGGERPQRQTSQRQDYAPRRQARQPSQSPQSSPPPMDDFADDDIPF) are disordered. Residues 111–122 (RSDGGGMGGGGE) show a composition bias toward gly residues. The Important for interaction with partner proteins motif lies at 159-164 (DDDIPF).

In terms of assembly, homotetramer.

In terms of biological role, plays an important role in DNA replication, recombination and repair. Binds to ssDNA and to an array of partner proteins to recruit them to their sites of action during DNA metabolism. This is Single-stranded DNA-binding protein 2 (ssb2) from Xylella fastidiosa (strain 9a5c).